A 1790-amino-acid polypeptide reads, in one-letter code: Vitellogenin (1790 aa).

A signal peptide spans 1-19; the sequence is MWSTVALCLLVGLSYVSSS. Residues 23 to 799 form the Vitellogenin domain; it reads WKDNTEYVYS…SAESSFPKIM (777 aa). N-linked (GlcNAc...) asparagine glycans are attached at residues asparagine 219 and asparagine 297. Residues 342–353 are compositionally biased toward acidic residues; sequence LMEDSSSEESSE. The tract at residues 342–400 is disordered; that stretch reads LMEDSSSEESSEQEMTHRRFRRSANSLTKQWRESSEEWNQQQQQPRPQLTRAPHSPLLP. Low complexity predominate over residues 378–389; the sequence is EWNQQQQQPRPQ. 9 N-linked (GlcNAc...) asparagine glycosylation sites follow: asparagine 554, asparagine 573, asparagine 893, asparagine 1345, asparagine 1416, asparagine 1430, asparagine 1480, asparagine 1699, and asparagine 1735. The region spanning 1466–1675 is the VWFD domain; it reads PTCVIDQTTA…SYQVEKGQQW (210 aa). Cysteine 1468 and cysteine 1638 are joined by a disulfide.

It localises to the secreted. Its function is as follows. Precursor of the egg-yolk proteins that are sources of nutrients during embryonic development. This chain is Vitellogenin (VTG), found in Anthonomus grandis (Mexican cotton boll weevil).